Consider the following 918-residue polypeptide: GPI ethanolamine phosphate transferase 3 (918 aa).

The helical transmembrane segment at 16 to 36 (IGTWKYIQACIFFAIILISNF) threads the bilayer. N-linked (GlcNAc...) asparagine glycosylation is found at asparagine 54, asparagine 71, asparagine 101, asparagine 197, and asparagine 399. 15 consecutive transmembrane segments (helical) span residues 429 to 449 (LFPM…LALL), 459 to 479 (MSAN…ILIL), 486 to 506 (SPFP…LNSF), 523 to 543 (FSIF…FTVW), 547 to 563 (LCHF…FCKC), 567 to 587 (MSPL…LQVI), 616 to 636 (TLIV…ILQL), 651 to 671 (LSIL…HHVF), 687 to 707 (SLAN…FFLL), 715 to 735 (INVI…LSFL), 738 to 758 (PLGH…IQLK), 762 to 782 (PSVG…SHFF), 813 to 833 (IFMF…IPLF), 853 to 873 (FSFI…AGFF), and 887 to 907 (FMLS…QCFG).

Belongs to the PIGG/PIGN/PIGO family. PIGO subfamily. Glycosylated.

The protein resides in the endoplasmic reticulum membrane. Its pathway is glycolipid biosynthesis; glycosylphosphatidylinositol-anchor biosynthesis. Functionally, involved in glycosylphosphatidylinositol-anchor biosynthesis. Transfers ethanolamine phosphate to the GPI third mannose which links the GPI-anchor to the C-terminus of the proteins by an amide bond. Involved in cell wall biosynthesis. The polypeptide is GPI ethanolamine phosphate transferase 3 (gpi13) (Schizosaccharomyces pombe (strain 972 / ATCC 24843) (Fission yeast)).